The sequence spans 283 residues: uncharacterized protein (283 aa).

This is an uncharacterized protein from Acanthamoeba polyphaga mimivirus (APMV).